The primary structure comprises 385 residues: Tuliposide A-converting enzyme 1, chloroplastic (385 aa).

The N-terminal 77 residues, 1–77 (MSVASFFSSL…PSPSLSPTPT (77 aa)), are a transit peptide targeting the chloroplast. Ser235 serves as the catalytic Acyl-ester intermediate. Catalysis depends on charge relay system residues Asp327 and His359.

This sequence belongs to the AB hydrolase superfamily. As to quaternary structure, homodimer. In terms of tissue distribution, expressed in roots, stems, leaves, petals, stamens and pistils, but not in bulb scales.

The protein localises to the plastid. It is found in the chloroplast. The catalysed reaction is 6-tuliposide A = tulipalin A + D-glucose. Inhibited by NaF, AgNO(3), HgCl(2), CuSO(4) and phenylmethylsulfonyl fluoride (PMSF). Lactone-forming carboxylesterases, specifically catalyzing intramolecular transesterification, but not hydrolysis. Involved in the biosynthesis of tulipalins, defensive chemicals that show antimicrobial activities against a broad range of strains of bacteria and fungi. Substrates are 6-tuliposide A &gt; 6-tuliposide B. The polypeptide is Tuliposide A-converting enzyme 1, chloroplastic (TCEA1) (Tulipa gesneriana (Garden tulip)).